A 226-amino-acid chain; its full sequence is MSSQTPVVTVDGPSGAGKGTLCMLLSKKLGFQLLDSGAIYRVLALAAIHHGVDTESEDALVPLATHLDVQFVAEGDLVKVILEGEDVSKELRKEETGMAASKVAALPRVREALLRRQRAFEAAPGLVADGRDMGTVVFPNAKAKIFLDASAEERAHRRLKQLQDKGLDVRFDDLLSEIQERDDRDRNRPVAPLRPAEDALVLDSTSMSIDEVVEKALQYIESKLAE.

Position 12–20 (12–20 (GPSGAGKGT)) interacts with ATP.

The protein belongs to the cytidylate kinase family. Type 1 subfamily.

It is found in the cytoplasm. The catalysed reaction is CMP + ATP = CDP + ADP. It carries out the reaction dCMP + ATP = dCDP + ADP. This chain is Cytidylate kinase, found in Vibrio vulnificus (strain CMCP6).